Reading from the N-terminus, the 151-residue chain is NAD(P)H-quinone oxidoreductase subunit N (151 aa).

The protein belongs to the complex I NdhN subunit family. As to quaternary structure, NDH-1 can be composed of about 15 different subunits; different subcomplexes with different compositions have been identified which probably have different functions.

Its subcellular location is the cellular thylakoid membrane. The catalysed reaction is a plastoquinone + NADH + (n+1) H(+)(in) = a plastoquinol + NAD(+) + n H(+)(out). It catalyses the reaction a plastoquinone + NADPH + (n+1) H(+)(in) = a plastoquinol + NADP(+) + n H(+)(out). In terms of biological role, NDH-1 shuttles electrons from an unknown electron donor, via FMN and iron-sulfur (Fe-S) centers, to quinones in the respiratory and/or the photosynthetic chain. The immediate electron acceptor for the enzyme in this species is believed to be plastoquinone. Couples the redox reaction to proton translocation, and thus conserves the redox energy in a proton gradient. Cyanobacterial NDH-1 also plays a role in inorganic carbon-concentration. This is NAD(P)H-quinone oxidoreductase subunit N from Acaryochloris marina (strain MBIC 11017).